A 111-amino-acid chain; its full sequence is Prostate and testis expressed protein 2 (111 aa).

The N-terminal stretch at Met-1–Asn-18 is a signal peptide. One can recognise a UPAR/Ly6 domain in the interval Leu-27–Pro-108. Intrachain disulfides connect Cys-29/Cys-55, Cys-32/Cys-40, Cys-47/Cys-78, and Cys-82/Cys-99.

This sequence belongs to the PATE family. Expressed in prostate, testis, brain and lung.

The protein resides in the secreted. The chain is Prostate and testis expressed protein 2 (Pate2) from Mus musculus (Mouse).